A 499-amino-acid polypeptide reads, in one-letter code: Potassium voltage-gated channel subfamily A member 2 (499 aa).

Positions 1–26 are disordered; that stretch reads MTVATEDPADEAAALPGHPQDTYDPE. The tract at residues 1 to 125 is tetramerization domain; sequence MTVATEDPAD…YELGEEAMEM (125 aa). Residues 1 to 160 are Cytoplasmic-facing; it reads MTVATEDPAD…LLFEYPESSG (160 aa). A helical transmembrane segment spans residues 161–182; sequence PARIIAIVSVMVILISIVSFCL. The Extracellular portion of the chain corresponds to 183–221; sequence ETLPIFRDENEDMHGSGMTFHTYSNSTAGYQQSTSFTDP. N-linked (GlcNAc...) asparagine glycosylation occurs at Asn207. Residues 222–243 form a helical membrane-spanning segment; sequence FFIVETLCIIWFSFEFLVRFFA. Residue Cys244 is the site of S-palmitoyl cysteine attachment. At 244 to 254 the chain is on the cytoplasmic side; sequence CPSKAGFFTNI. A helical membrane pass occupies residues 255–275; the sequence is MNIIDIVAIIPYFITLGTELA. The Extracellular segment spans residues 276–289; sequence EKPEDAQQGQQAMS. Residues 290–310 form a helical; Voltage-sensor membrane-spanning segment; the sequence is LAILRVIRLVRVFRIFKLSRH. Topologically, residues 311-325 are cytoplasmic; that stretch reads SKGLQILGQTLKASM. The S4-S5 linker stretch occupies residues 312–325; that stretch reads KGLQILGQTLKASM. Residues 326–347 traverse the membrane as a helical segment; it reads RELGLLIFFLFIGVILFSSAVY. At 348 to 361 the chain is on the extracellular side; the sequence is FAEADERDSQFPSI. The segment at residues 362-373 is an intramembrane region (helical); sequence PDAFWWAVVSMT. Residues 374–379 carry the Selectivity filter motif; that stretch reads TVGYGD. The stretch at 374 to 381 is an intramembrane region; sequence TVGYGDMV. At 382–388 the chain is on the extracellular side; the sequence is PTTIGGK. The helical transmembrane segment at 389-417 threads the bilayer; sequence IVGSLCAIAGVLTIALPVPVIVSNFNYFY. Residues 418–499 lie on the Cytoplasmic side of the membrane; the sequence is HRETEGEEQA…VNITKMLTDV (82 aa). Tyr429 bears the Phosphotyrosine mark. Phosphoserine occurs at positions 434, 440, 441, and 449. Tyr458 is modified (phosphotyrosine). Ser468 bears the Phosphoserine mark. A PDZ-binding motif is present at residues 497-499; that stretch reads TDV.

Belongs to the potassium channel family. A (Shaker) (TC 1.A.1.2) subfamily. Kv1.2/KCNA2 sub-subfamily. Homotetramer and heterotetramer with other channel-forming alpha subunits, such as KCNA1, KCNA4, KCNA5, KCNA6 and KCNA7. Channel activity is regulated by interaction with the beta subunits, including KCNAB1 and KCNAB2. Identified in a complex with KCNA1 and KCNAB2. Identified in a complex with KCNA4 and FYN. Identified in a complex with KCNA5 and KCNAB1. Interacts with the beta subunit KCNAB1. Interacts with PTK2B. Interacts (via C-terminus) with CTTN. Interacts (via N-terminal cytoplasmic domain) with RHOA (GTP-bound form); this regulates channel activity by reducing location at the cell surface in response to CHRM1 activation. Interacts with DRD2. Interacts with SIGMAR1; cocaine consumption leads to increased interaction. Interacts with ADAM22. Interacts with CNTNAP2. Interacts (via C-terminus) with the PDZ domains of DLG1, DLG2 and DLG4. Interacts with ADAM11. Interacts with LYNX1. In terms of processing, phosphorylated on tyrosine residues; phosphorylation increases in response to ischemia. Phosphorylated on tyrosine residues by activated PTK2B/PYK2. Phosphorylation on tyrosine residues suppresses ion channel activity. Phosphorylated on tyrosine residues in response to CHRM1 activation; this abolishes interaction with CTTN. This is probably due to endocytosis of the phosphorylated channel subunits. Phosphorylated on serine residues in response to increased cAMP levels; phosphorylation is apparently not catalyzed by PKA. Post-translationally, N-glycosylated, with complex, sialylated N-glycans. Detected in portal vein myocytes (at protein level). Detected in portal vein. Brain, liver and kidney.

It localises to the cell membrane. The protein resides in the membrane. The protein localises to the cell projection. It is found in the axon. Its subcellular location is the synapse. It localises to the presynaptic cell membrane. The protein resides in the synaptosome. The protein localises to the endoplasmic reticulum membrane. It is found in the dendrite. Its subcellular location is the lamellipodium membrane. It localises to the cell junction. The protein resides in the paranodal septate junction. It carries out the reaction K(+)(in) = K(+)(out). With respect to regulation, inhibited by 4-aminopyridine (4-AP). Inhibited by dendrotoxin (DTX) and charybdotoxin (CTX), but not by tetraethylammonium (TEA). Inhibited by tityustoxin-K alpha (TsTX-Kalpha), a toxin that is highly specific for KCNA2. Inhibited by maurotoxin. Inhibited by kappaM conotoxins kappaM-RIIIJ and kappaM-RIIIK. Voltage-gated potassium channel that mediates transmembrane potassium transport in excitable membranes, primarily in the brain and the central nervous system, but also in the cardiovascular system. Prevents aberrant action potential firing and regulates neuronal output. Forms tetrameric potassium-selective channels through which potassium ions pass in accordance with their electrochemical gradient. The channel alternates between opened and closed conformations in response to the voltage difference across the membrane. Can form functional homotetrameric channels and heterotetrameric channels that contain variable proportions of KCNA1, KCNA2, KCNA4, KCNA5, KCNA6, KCNA7, and possibly other family members as well; channel properties depend on the type of alpha subunits that are part of the channel. Channel properties are modulated by cytoplasmic beta subunits that regulate the subcellular location of the alpha subunits and promote rapid inactivation of delayed rectifier potassium channels. In vivo, membranes probably contain a mixture of heteromeric potassium channel complexes, making it difficult to assign currents observed in intact tissues to any particular potassium channel family member. Homotetrameric KCNA2 forms a delayed-rectifier potassium channel that opens in response to membrane depolarization, followed by slow spontaneous channel closure. In contrast, a heteromultimer formed by KCNA2 and KCNA4 shows rapid inactivation. Regulates neuronal excitability and plays a role as pacemaker in the regulation of neuronal action potentials. KCNA2-containing channels play a presynaptic role and prevent hyperexcitability and aberrant action potential firing. Response to toxins that are selective for KCNA2-containing potassium channels suggests that in Purkinje cells, dendritic subthreshold KCNA2-containing potassium channels prevent random spontaneous calcium spikes, suppressing dendritic hyperexcitability without hindering the generation of somatic action potentials, and thereby play an important role in motor coordination. Plays a role in the induction of long-term potentiation of neuron excitability in the CA3 layer of the hippocampus. May function as down-stream effector for G protein-coupled receptors and inhibit GABAergic inputs to basolateral amygdala neurons. May contribute to the regulation of neurotransmitter release, such as gamma-aminobutyric acid (GABA). Contributes to the regulation of the axonal release of the neurotransmitter dopamine. Reduced KCNA2 expression plays a role in the perception of neuropathic pain after peripheral nerve injury, but not acute pain. Plays a role in the regulation of the time spent in non-rapid eye movement (NREM) sleep. In Oryctolagus cuniculus (Rabbit), this protein is Potassium voltage-gated channel subfamily A member 2 (KCNA2).